We begin with the raw amino-acid sequence, 276 residues long: Probable endonuclease 4 (276 aa).

Histidine 70, histidine 108, glutamate 143, aspartate 176, histidine 179, histidine 210, aspartate 223, histidine 225, and glutamate 255 together coordinate Zn(2+).

The protein belongs to the AP endonuclease 2 family. It depends on Zn(2+) as a cofactor.

The catalysed reaction is Endonucleolytic cleavage to 5'-phosphooligonucleotide end-products.. Its function is as follows. Endonuclease IV plays a role in DNA repair. It cleaves phosphodiester bonds at apurinic or apyrimidinic (AP) sites, generating a 3'-hydroxyl group and a 5'-terminal sugar phosphate. This chain is Probable endonuclease 4, found in Mesomycoplasma hyopneumoniae (strain 7448) (Mycoplasma hyopneumoniae).